We begin with the raw amino-acid sequence, 111 residues long: uncharacterized protein (111 aa).

It to A.fulgidus AF1864.

This is an uncharacterized protein from Aquifex aeolicus (strain VF5).